Here is a 257-residue protein sequence, read N- to C-terminus: Acetylglutamate kinase (257 aa).

Substrate is bound by residues 43–44 (GG), Arg65, and Asn157. Residues 180–185 (DVSGIL) and 208–210 (IIT) contribute to the ATP site.

This sequence belongs to the acetylglutamate kinase family. ArgB subfamily. In terms of assembly, homodimer.

It is found in the cytoplasm. It catalyses the reaction N-acetyl-L-glutamate + ATP = N-acetyl-L-glutamyl 5-phosphate + ADP. Its pathway is amino-acid biosynthesis; L-arginine biosynthesis; N(2)-acetyl-L-ornithine from L-glutamate: step 2/4. In terms of biological role, catalyzes the ATP-dependent phosphorylation of N-acetyl-L-glutamate. This chain is Acetylglutamate kinase, found in Salmonella paratyphi A (strain AKU_12601).